The chain runs to 520 residues: UvrABC system protein C (520 aa).

Residues 11 to 89 form the GIY-YIG domain; the sequence is EEPGCYQFKD…IKKYQPKYNI (79 aa). The 36-residue stretch at 195-230 folds into the UVR domain; that stretch reads QDLIYDLRKEMETFAAAEEYEKALVIRDRIAAIENL.

The protein belongs to the UvrC family. In terms of assembly, interacts with UvrB in an incision complex.

The protein localises to the cytoplasm. The UvrABC repair system catalyzes the recognition and processing of DNA lesions. UvrC both incises the 5' and 3' sides of the lesion. The N-terminal half is responsible for the 3' incision and the C-terminal half is responsible for the 5' incision. The sequence is that of UvrABC system protein C from Methanospirillum hungatei JF-1 (strain ATCC 27890 / DSM 864 / NBRC 100397 / JF-1).